A 723-amino-acid polypeptide reads, in one-letter code: BBSome complex assembly protein BBS10 (723 aa).

The protein belongs to the TCP-1 chaperonin family. As to quaternary structure, component of a complex composed at least of MKKS, BBS10, BBS12, TCP1, CCT2, CCT3, CCT4, CCT5 and CCT8.

It is found in the cell projection. The protein localises to the cilium. Functionally, probable molecular chaperone that assists the folding of proteins upon ATP hydrolysis. Plays a role in the assembly of BBSome, a complex involved in ciliogenesis regulating transports vesicles to the cilia. Involved in adipogenic differentiation. In Pongo abelii (Sumatran orangutan), this protein is BBSome complex assembly protein BBS10 (BBS10).